We begin with the raw amino-acid sequence, 274 residues long: Elongation factor Ts (274 aa).

Residues 82 to 85 are involved in Mg(2+) ion dislocation from EF-Tu; it reads TDFV.

It belongs to the EF-Ts family.

It localises to the cytoplasm. Functionally, associates with the EF-Tu.GDP complex and induces the exchange of GDP to GTP. It remains bound to the aminoacyl-tRNA.EF-Tu.GTP complex up to the GTP hydrolysis stage on the ribosome. This Flavobacterium psychrophilum (strain ATCC 49511 / DSM 21280 / CIP 103535 / JIP02/86) protein is Elongation factor Ts.